Reading from the N-terminus, the 670-residue chain is MSDGPIAPPKPAVVAEAHEVDTFHVPKAFFDKHPSGPHLKNLDEYKKLYEESIRSPDVFWARKARELLTFDKDFQTTRIGSLENGDVAWFPEGRLNASFNCVDRHAIKNPNKVAIIYEADEPNEGRTITYGELLREVSRVAWVLKQRGVKKGDTVAIYLPMIPEAIIAFLACSRIGAVHSVVFAGFSSDSLRDRVLDAGSKVVITTDEGKRGGKVIGTKRIVDEGLKQCPDVSTVLVYKRTGAEVPWTEGRDIWWHEEVEKYPAYIAPDSVNSEDPLFLLYTSGSTGKPKGVMHTTAGYLLGAAMTGKYVFDIHDDDRYFCGGDVGWITGHTYVVYAPLLLGCSTVVFESTPAYPDFSRYWDVIEKHKVTQFYVAPTALRLLKRAGDHHIHHKMEHLRVLGSVGEPIAAEVWKWYFEKVGKEEAHICDTYWQTETGSNVITPLAGVTPTKPGSASLPFFGIEPAIIDPVSGEEISGNDVEGVLAFKQPWPSMARTVWGAHKRYMDTYLNVYKGYYFTGDGAGRDHEGYYWIRGRVDDVVNVSGHRLSTAEIEAALIEHPMVAEAAVVGIADELTGQAVNAFVSLKEGNETNDQVRKDLILQVRKSIGPFAAPKAVFVVDDLPKTRSGKIMRRILRKILSGEEDSLGDISTLSDPSVVERIIATVHASRGK.

Residues 211 to 214 and Thr-329 each bind CoA; that span reads RGGK. ATP is bound by residues 404–406, 428–433, Asp-519, and Arg-534; these read GEP and DTYWQT. Position 542 (Ser-542) interacts with CoA. ATP is bound at residue Arg-545. Residue Arg-603 coordinates CoA.

Belongs to the ATP-dependent AMP-binding enzyme family.

It carries out the reaction acetate + ATP + CoA = acetyl-CoA + AMP + diphosphate. In Emericella nidulans (strain FGSC A4 / ATCC 38163 / CBS 112.46 / NRRL 194 / M139) (Aspergillus nidulans), this protein is Acetyl-coenzyme A synthetase (facA).